The sequence spans 348 residues: Phosphate acyltransferase (348 aa).

It belongs to the PlsX family. As to quaternary structure, homodimer. Probably interacts with PlsY.

The protein localises to the cytoplasm. The catalysed reaction is a fatty acyl-[ACP] + phosphate = an acyl phosphate + holo-[ACP]. The protein operates within lipid metabolism; phospholipid metabolism. Its function is as follows. Catalyzes the reversible formation of acyl-phosphate (acyl-PO(4)) from acyl-[acyl-carrier-protein] (acyl-ACP). This enzyme utilizes acyl-ACP as fatty acyl donor, but not acyl-CoA. The protein is Phosphate acyltransferase of Leuconostoc citreum (strain KM20).